The chain runs to 160 residues: Cytochrome c-type biogenesis protein CcmE (160 aa).

At 1–8 the chain is on the cytoplasmic side; it reads MNPRRKKR. The helical; Signal-anchor for type II membrane protein transmembrane segment at 9-29 threads the bilayer; sequence LGIILAIFFGISATVGLMVYA. Over 30–160 the chain is Periplasmic; that stretch reads LNQNMDLFYT…TTEQKEGNAQ (131 aa). Residues His-128 and Tyr-132 each contribute to the heme site.

The protein belongs to the CcmE/CycJ family.

The protein resides in the cell inner membrane. Its function is as follows. Heme chaperone required for the biogenesis of c-type cytochromes. Transiently binds heme delivered by CcmC and transfers the heme to apo-cytochromes in a process facilitated by CcmF and CcmH. This is Cytochrome c-type biogenesis protein CcmE from Vibrio atlanticus (strain LGP32) (Vibrio splendidus (strain Mel32)).